The sequence spans 129 residues: Small ribosomal subunit protein uS11 (129 aa).

Residues 108–129 (EDVTPIPHDGTKPKGGKRGRRV) are disordered.

The protein belongs to the universal ribosomal protein uS11 family. As to quaternary structure, part of the 30S ribosomal subunit.

Located on the platform of the 30S subunit. This is Small ribosomal subunit protein uS11 from Methanothrix thermoacetophila (strain DSM 6194 / JCM 14653 / NBRC 101360 / PT) (Methanosaeta thermophila).